Here is a 1533-residue protein sequence, read N- to C-terminus: Glycogen debranching enzyme (1533 aa).

Ser64 carries the phosphoserine modification. Active-site residues include Asp527, His530, and Asp628.

This sequence belongs to the glycogen debranching enzyme family. Monomer. Interacts with NHLRC1/malin. In terms of processing, ubiquitinated.

It localises to the cytoplasm. It catalyses the reaction Transfers a segment of a (1-&gt;4)-alpha-D-glucan to a new position in an acceptor, which may be glucose or a (1-&gt;4)-alpha-D-glucan.. It carries out the reaction Hydrolysis of (1-&gt;6)-alpha-D-glucosidic branch linkages in glycogen phosphorylase limit dextrin.. In terms of biological role, multifunctional enzyme acting as 1,4-alpha-D-glucan:1,4-alpha-D-glucan 4-alpha-D-glycosyltransferase and amylo-1,6-glucosidase in glycogen degradation. The protein is Glycogen debranching enzyme (AGL) of Canis lupus familiaris (Dog).